The chain runs to 470 residues: Poly(A) polymerase catalytic subunit (470 aa).

Active-site residues include Asp-192 and Asp-194.

It belongs to the poxviridae poly(A) polymerase catalytic subunit family. As to quaternary structure, heterodimer of a large (catalytic) subunit and a small (regulatory) subunit.

It catalyses the reaction RNA(n) + ATP = RNA(n)-3'-adenine ribonucleotide + diphosphate. Functionally, polymerase that creates the 3'-poly(A) tail of mRNA's. This chain is Poly(A) polymerase catalytic subunit (PAPL), found in Myxoma virus (strain Lausanne) (MYXV).